The primary structure comprises 184 residues: Large ribosomal subunit protein uL6 (184 aa).

This sequence belongs to the universal ribosomal protein uL6 family. Part of the 50S ribosomal subunit.

In terms of biological role, this protein binds to the 23S rRNA, and is important in its secondary structure. It is located near the subunit interface in the base of the L7/L12 stalk, and near the tRNA binding site of the peptidyltransferase center. In Pseudothermotoga lettingae (strain ATCC BAA-301 / DSM 14385 / NBRC 107922 / TMO) (Thermotoga lettingae), this protein is Large ribosomal subunit protein uL6.